Consider the following 609-residue polypeptide: Glutamine--fructose-6-phosphate aminotransferase [isomerizing] (609 aa).

Residue C2 is the Nucleophile; for GATase activity of the active site. The Glutamine amidotransferase type-2 domain occupies 2–218; it reads CGIVGAIAQR…EGDIAEITRR (217 aa). 2 SIS domains span residues 286–426 and 458–599; these read ADEL…LKGL and LAED…VDQP. Catalysis depends on K604, which acts as the For Fru-6P isomerization activity.

In terms of assembly, homodimer.

The protein localises to the cytoplasm. It carries out the reaction D-fructose 6-phosphate + L-glutamine = D-glucosamine 6-phosphate + L-glutamate. Catalyzes the first step in hexosamine metabolism, converting fructose-6P into glucosamine-6P using glutamine as a nitrogen source. This Escherichia coli O157:H7 protein is Glutamine--fructose-6-phosphate aminotransferase [isomerizing].